A 73-amino-acid polypeptide reads, in one-letter code: Disintegrin trigramin-beta-2 (73 aa).

The Disintegrin domain maps to 1 to 73; that stretch reads EAGKDCDCGS…AGCPRNPFHA (73 aa). 6 cysteine pairs are disulfide-bonded: Cys-6–Cys-21, Cys-8–Cys-16, Cys-15–Cys-38, Cys-29–Cys-35, Cys-34–Cys-59, and Cys-47–Cys-66. Residues 51-53 carry the Cell attachment site motif; sequence RGD.

It belongs to the venom metalloproteinase (M12B) family. P-II subfamily. P-IIa sub-subfamily. In terms of assembly, monomer (disintegrin). As to expression, expressed by the venom gland.

The protein localises to the secreted. Inhibits fibrinogen interaction with platelets. Acts by binding to the alpha-IIb/beta-3 receptor (ITGA2B/ITGB3) on the platelet surface and inhibits aggregation induced by ADP, thrombin, platelet-activating factor and collagen. This chain is Disintegrin trigramin-beta-2, found in Craspedocephalus gramineus (Bamboo pit viper).